The following is a 429-amino-acid chain: Endoglucanase type C (429 aa).

An N-terminal signal peptide occupies residues 1–18; that stretch reads MKSLSLILSALAVQVAVA. Gln-19 is modified (pyrrolidone carboxylic acid). Intrachain disulfides connect Cys-36-Cys-42, Cys-66-Cys-88, Cys-78-Cys-84, Cys-156-Cys-383, Cys-190-Cys-213, Cys-194-Cys-212, Cys-233-Cys-252, Cys-241-Cys-246, and Cys-257-Cys-333. An N-linked (GlcNAc...) asparagine glycan is attached at Asn-74. Glu-215 acts as the Nucleophile in catalysis. The active-site Proton donor is Glu-220. Asn-265 and Asn-318 each carry an N-linked (GlcNAc...) asparagine glycan.

This sequence belongs to the glycosyl hydrolase 7 (cellulase C) family.

The enzyme catalyses Endohydrolysis of (1-&gt;4)-beta-D-glucosidic linkages in cellulose, lichenin and cereal beta-D-glucans.. This is Endoglucanase type C from Fusarium oxysporum (Fusarium vascular wilt).